Reading from the N-terminus, the 714-residue chain is Polyribonucleotide nucleotidyltransferase (714 aa).

Residues Asp488 and Asp494 each coordinate Mg(2+). The KH domain occupies 555–614; sequence PRIEVMNIPTDKIRDVIGSGGKVIREIVEKTGAKINIEDDGTVKIASSNGKEIEAAKKWI. In terms of domain architecture, S1 motif spans 624-692; sequence GEIYEGTVVK…ERGKVRLSMK (69 aa).

It belongs to the polyribonucleotide nucleotidyltransferase family. Requires Mg(2+) as cofactor.

The protein resides in the cytoplasm. It catalyses the reaction RNA(n+1) + phosphate = RNA(n) + a ribonucleoside 5'-diphosphate. In terms of biological role, involved in mRNA degradation. Catalyzes the phosphorolysis of single-stranded polyribonucleotides processively in the 3'- to 5'-direction. This chain is Polyribonucleotide nucleotidyltransferase, found in Brucella melitensis biotype 2 (strain ATCC 23457).